The primary structure comprises 1028 residues: Formate dehydrogenase major subunit (1028 aa).

Residues 1–33 (MQVSRRKFFKICAGGMAGTSAAMLGFAPANVLA) constitute a signal peptide (tat-type signal). The 4Fe-4S Mo/W bis-MGD-type domain occupies 43-114 (AFESRNTCTY…GSLDYVNSES (72 aa)). [4Fe-4S] cluster is bound by residues Cys50, Cys53, Cys57, and Cys100. A non-standard amino acid (selenocysteine) is located at residue Sec204.

It belongs to the prokaryotic molybdopterin-containing oxidoreductase family. Formate dehydrogenase is a membrane-bound complex, formed by subunits alpha, beta and gamma. The cofactor is Mo-bis(molybdopterin guanine dinucleotide). Requires [4Fe-4S] cluster as cofactor. Predicted to be exported by the Tat system. The position of the signal peptide cleavage has not been experimentally proven.

Its subcellular location is the periplasm. The enzyme catalyses formate + NAD(+) = CO2 + NADH. Its function is as follows. Allows to use formate as major electron donor during anaerobic respiration. Subunit alpha possibly forms the active site. This is Formate dehydrogenase major subunit (fdxG) from Haemophilus influenzae (strain ATCC 51907 / DSM 11121 / KW20 / Rd).